Here is a 243-residue protein sequence, read N- to C-terminus: Carboxy-S-adenosyl-L-methionine synthase (243 aa).

S-adenosyl-L-methionine-binding positions include tyrosine 40, 65-67, 90-91, 118-119, asparagine 133, and arginine 200; these read GCS, DN, and DI.

It belongs to the class I-like SAM-binding methyltransferase superfamily. Cx-SAM synthase family. In terms of assembly, homodimer.

It catalyses the reaction prephenate + S-adenosyl-L-methionine = carboxy-S-adenosyl-L-methionine + 3-phenylpyruvate + H2O. Its function is as follows. Catalyzes the conversion of S-adenosyl-L-methionine (SAM) to carboxy-S-adenosyl-L-methionine (Cx-SAM). This Shewanella baltica (strain OS223) protein is Carboxy-S-adenosyl-L-methionine synthase.